The following is a 724-amino-acid chain: Catalase-peroxidase (724 aa).

A disordered region spans residues 1-20 (MDENKTKPAGKCPVMHGGNT). A cross-link (tryptophyl-tyrosyl-methioninium (Trp-Tyr) (with M-251)) is located at residues 98–225 (WHSAGTYRTA…LAAVQMGLIY (128 aa)). His-99 (proton acceptor) is an active-site residue. The segment at residues 225–251 (YVNPEGVDGNPDPLRTAQDMRVTFSRM) is a cross-link (tryptophyl-tyrosyl-methioninium (Tyr-Met) (with W-98)). His-266 lines the heme b pocket.

The protein belongs to the peroxidase family. Peroxidase/catalase subfamily. Homodimer or homotetramer. Requires heme b as cofactor. Formation of the three residue Trp-Tyr-Met cross-link is important for the catalase, but not the peroxidase activity of the enzyme.

It catalyses the reaction H2O2 + AH2 = A + 2 H2O. The catalysed reaction is 2 H2O2 = O2 + 2 H2O. In terms of biological role, bifunctional enzyme with both catalase and broad-spectrum peroxidase activity. This is Catalase-peroxidase from Pectobacterium carotovorum subsp. carotovorum (strain PC1).